Here is a 36-residue protein sequence, read N- to C-terminus: Conotoxin Bt11.4 (36 aa).

4 disulfides stabilise this stretch: Cys2–Cys16, Cys9–Cys21, Cys15–Cys26, and Cys20–Cys33.

It belongs to the conotoxin I1 superfamily. In terms of tissue distribution, expressed by the venom duct.

It is found in the secreted. This chain is Conotoxin Bt11.4, found in Conus betulinus (Beech cone).